The primary structure comprises 107 residues: Glutaredoxin 4 (107 aa).

Positions 4–106 constitute a Glutaredoxin domain; the sequence is IDKIKQQINE…TLLKETATKH (103 aa). Lysine 21 lines the glutathione pocket. Cysteine 29 is a binding site for [2Fe-2S] cluster. Glutathione contacts are provided by residues arginine 58, phenylalanine 70, and 83 to 84; that span reads CD.

This sequence belongs to the glutaredoxin family. Monothiol subfamily. As to quaternary structure, homodimer.

The protein resides in the cytoplasm. Functionally, monothiol glutaredoxin involved in the biogenesis of iron-sulfur clusters. The sequence is that of Glutaredoxin 4 (grxD) from Haemophilus ducreyi (strain 35000HP / ATCC 700724).